The sequence spans 192 residues: Cytochrome b-245 light chain (192 aa).

Residues 2–7 (GQIEWA) lie on the Cytoplasmic side of the membrane. The helical transmembrane segment at 8–30 (MWANEQALASGLILITGGIVATA) threads the bilayer. Residues 31 to 35 (GRFTQ) are Extracellular-facing. A helical transmembrane segment spans residues 36 to 53 (WYFGAYSIAAGVLICLLE). Residues 54-69 (YPRGKRKKGSTMERCG) lie on the Cytoplasmic side of the membrane. The stretch at 70 to 80 (QKYLTSVVKLF) is an intramembrane region. Over 81 to 86 (GPLTRN) the chain is Cytoplasmic. Residues 87–104 (YYVRAALHFLLSVPAGFL) form a helical membrane-spanning segment. Leu-105 is a topological domain (extracellular). A helical membrane pass occupies residues 106–126 (ATILGTVCLAIASVIYLLAAI). At 127 to 192 (RGEQWTPIEP…NPMPVTDEVV (66 aa)) the chain is on the cytoplasmic side. A disordered region spans residues 134–192 (IEPKPKERPQVGGTIKQPPTNPPPRPPAEVRKKPSEGEEEAASAGGPQVNPMPVTDEVV). At Thr-147 the chain carries Phosphothreonine. Residue Lys-149 forms a Glycyl lysine isopeptide (Lys-Gly) (interchain with G-Cter in ubiquitin) linkage. Phosphoserine occurs at positions 168 and 176.

The protein belongs to the p22phox family. Component of the phagocyte NADPH oxidase core complex/cytochrome b558 complex, composed of CYBB (heavy chain (beta)) and CYBA (light chain (alpha)). Component of the phagocyte NADPH oxidase complex composed of an obligatory core heterodimer formed by the membrane proteins CYBA and CYBB and the cytosolic regulatory subunits NCF1/p47-phox, NCF2/p67-phox, NCF4/p40-phox and the small GTPase RAC1 or RAC2. Interacts with NCF1 (via SH3 domain). Interacts with SH3PXD2A. Interacts with DUOX1, DUOX2 and TPO. Interacts with NOX4; this interaction mediates superoxide generation. Interacts with calprotectin (S100A8/9). Interacts with GBP7. Interacts with NOXO1. Forms a heterodimer with NOX3 and is essential for activity and cell membrane localization of NOX3. Interacts with NOX1. Ubiquitinated at Lys-149 likely by RNF145. Post-translationally, phosphorylation at Thr-147 enhances NADPH oxidase activity by promoting NCF1/p47-phox binding. The strongest level of expression is found in kidney, peritoneal neutrophils and peritoneal macrophages, and a lower level in spleen and small intestine. Very low level of expression can be noted in brain, liver, testis, and heart.

It is found in the cell membrane. In terms of biological role, subunit of NADPH oxidase complexes that is required for the NADPH oxidase activity that generates, in various cell types, superoxide from molecular oxygen utilizing NADPH as an electron donor. Subunit of the phagocyte NADPH oxidase complex that mediates the transfer of electrons from cytosolic NADPH to O2 to produce the superoxide anion (O2(-)). In the activated complex, electrons are first transferred from NADPH to flavin adenine dinucleotide (FAD) and subsequently transferred via two heme molecules to molecular oxygen, producing superoxide through an outer-sphere reaction. Activation of the NADPH oxidase complex is initiated by the assembly of cytosolic subunits of the NADPH oxidase complex with the core NADPH oxidase complex to form a complex at the plasma membrane or phagosomal membrane. This activation process is initiated by phosphorylation dependent binding of the cytosolic NCF1/p47-phox subunit to the C-terminus of CYBA/p22-phox. Aassociates with NOX3 to form a functional NADPH oxidase constitutively generating superoxide. This chain is Cytochrome b-245 light chain, found in Mus musculus (Mouse).